The sequence spans 282 residues: Undecaprenyl-diphosphatase (282 aa).

Helical transmembrane passes span 7–29 (VLFAILQGATELFPVSSLGHVVI), 45–65 (FLPFVVMLHVGTATALLLYFW), 89–109 (GLLLRLVVATLPAVLIGFALK), 115–135 (LFASPEIAAAFLIANGAVLII), 153–173 (LTLRDSLVIGLFQCLAFLPGL), 196–216 (FAFLMATPVIAGAAVIEVPHL), 229–249 (TALLAAVVAGVVAYLSTAFLM), and 258–278 (WALGPFAAYCALFGALSLILI).

The protein belongs to the UppP family.

The protein resides in the cell inner membrane. It carries out the reaction di-trans,octa-cis-undecaprenyl diphosphate + H2O = di-trans,octa-cis-undecaprenyl phosphate + phosphate + H(+). Catalyzes the dephosphorylation of undecaprenyl diphosphate (UPP). Confers resistance to bacitracin. The polypeptide is Undecaprenyl-diphosphatase (Acidiphilium cryptum (strain JF-5)).